A 277-amino-acid chain; its full sequence is NH(3)-dependent NAD(+) synthetase (277 aa).

46–53 (GISGGQDS) serves as a coordination point for ATP. Asp-52 lines the Mg(2+) pocket. Arg-141 provides a ligand contact to deamido-NAD(+). Thr-161 is a binding site for ATP. Glu-166 lines the Mg(2+) pocket. Deamido-NAD(+) contacts are provided by Lys-174 and Asp-181. The ATP site is built by Lys-190 and Thr-212. 262-263 (HK) contributes to the deamido-NAD(+) binding site.

This sequence belongs to the NAD synthetase family. As to quaternary structure, homodimer.

The catalysed reaction is deamido-NAD(+) + NH4(+) + ATP = AMP + diphosphate + NAD(+) + H(+). It participates in cofactor biosynthesis; NAD(+) biosynthesis; NAD(+) from deamido-NAD(+) (ammonia route): step 1/1. Catalyzes the ATP-dependent amidation of deamido-NAD to form NAD. Uses ammonia as a nitrogen source. The chain is NH(3)-dependent NAD(+) synthetase from Corynebacterium efficiens (strain DSM 44549 / YS-314 / AJ 12310 / JCM 11189 / NBRC 100395).